We begin with the raw amino-acid sequence, 207 residues long: Heat shock protein beta-1 (207 aa).

Arg-12 carries the omega-N-methylarginine modification. Position 13 is a phosphoserine (Ser-13). Ser-15 is subject to Phosphoserine; by MAPKAPK2 and MAPKAPK3. Ser-27 is modified (phosphoserine). Positions 72–207 (APAYSRLLSR…AGKSEKPGTK (136 aa)) are interaction with TGFB1I1. Positions 78-186 (LLSRQLSSGV…QSAEITIPVT (109 aa)) constitute a sHSP domain. Phosphoserine; by MAPKAPK2, MAPKAPK3 and MAPKAPK5 occurs at positions 80 and 84. Residues Ser-85, Ser-88, and Ser-100 each carry the phosphoserine modification. Position 125 is an N6-acetyllysine (Lys-125). Positions 151–181 (DPTQVSSSLSPEGTLSVEAPLPKPATQSAEI) are disordered. The segment covering 153–163 (TQVSSSLSPEG) has biased composition (polar residues). Thr-176 is subject to Phosphothreonine. Phosphoserine occurs at positions 178 and 201.

It belongs to the small heat shock protein (HSP20) family. In terms of assembly, homooligomer. Homodimer; becomes monomeric upon activation. Heterooligomer; with HSPB6. Associates with alpha- and beta-tubulin. Interacts with TGFB1I1. Interacts with CRYAB. Interacts with HSPB8. Interacts with HSPBAP1. Phosphorylated upon exposure to protein kinase C activators and heat shock. Phosphorylation by MAPKAPK2 and MAPKAPK3 in response to stress dissociates HSPB1 from large small heat-shock protein (sHsps) oligomers and impairs its chaperone activity and ability to protect against oxidative stress effectively. Phosphorylation by MAPKAPK5 in response to PKA stimulation induces F-actin rearrangement.

Its subcellular location is the cytoplasm. The protein localises to the nucleus. It localises to the cytoskeleton. It is found in the spindle. Its function is as follows. Small heat shock protein which functions as a molecular chaperone probably maintaining denatured proteins in a folding-competent state. Plays a role in stress resistance and actin organization. Through its molecular chaperone activity may regulate numerous biological processes including the phosphorylation and the axonal transport of neurofilament proteins. The sequence is that of Heat shock protein beta-1 (HSPB1) from Sus scrofa (Pig).